The sequence spans 146 residues: Large ribosomal subunit protein uL15 (146 aa).

The tract at residues 1–64 is disordered; sequence MELNSIKPAA…MPMHRRLPKR (64 aa). Over residues 30 to 39 the composition is skewed to basic residues; it reads TATKGHKGQK.

It belongs to the universal ribosomal protein uL15 family. As to quaternary structure, part of the 50S ribosomal subunit.

Functionally, binds to the 23S rRNA. This is Large ribosomal subunit protein uL15 from Geotalea daltonii (strain DSM 22248 / JCM 15807 / FRC-32) (Geobacter daltonii).